We begin with the raw amino-acid sequence, 233 residues long: Octanoyltransferase (233 aa).

The BPL/LPL catalytic domain maps to 36-211 (DTTPDEIWLV…EFTRQLGYPT (176 aa)). Substrate contacts are provided by residues 75–82 (RGGQITYH), 142–144 (SLG), and 155–157 (GLA). Residue Cys-173 is the Acyl-thioester intermediate of the active site.

Belongs to the LipB family.

Its subcellular location is the cytoplasm. The enzyme catalyses octanoyl-[ACP] + L-lysyl-[protein] = N(6)-octanoyl-L-lysyl-[protein] + holo-[ACP] + H(+). It functions in the pathway protein modification; protein lipoylation via endogenous pathway; protein N(6)-(lipoyl)lysine from octanoyl-[acyl-carrier-protein]: step 1/2. Functionally, catalyzes the transfer of endogenously produced octanoic acid from octanoyl-acyl-carrier-protein onto the lipoyl domains of lipoate-dependent enzymes. Lipoyl-ACP can also act as a substrate although octanoyl-ACP is likely to be the physiological substrate. This chain is Octanoyltransferase, found in Yersinia pseudotuberculosis serotype O:1b (strain IP 31758).